Here is a 502-residue protein sequence, read N- to C-terminus: MATKKATMIIEKDFKIAEIDKRIYGSFIEHLGRAVYGGIYEPGHPQADENGFRQDVIELVKELQVPIIRYPGGNFVSGYNWEDGVGPKEQRPRRLDLAWKSVETNEIGLNEFMDWAKMVGAEVNMAVNLGTRGIDAARNLVEYCNHPSGSYYSDLRIAHGYKEPHKIKTWCLGNEMDGPWQIGHKTAVEYGRIACEAAKVMKWVDPTIELVVCGSSNRNMPTFAEWEATVLDHTYDHVDYISLHQYYGNRDNDTANYLALSLEMDDFIRSVVAIADYVKAKKRSKKTIHLSFDEWNVWYHSNEADKLIEPWTVAPPLLEDIYNFEDALLVGCMLITLMKHADRVKIACLAQLVNVIAPIMTEKNGPAWKQTIYYPFMHASVYGRGVALHPVISSPKYDSKDFTDVPYLESIAVYNEEKEEVTIFAVNRDMEDALLLECDVRSFEDYRVIEHIVLEHDNVKQTNSAQSSPVVPHRNGDAQLSDRKVSATLPKLSWNVIRLGKR.

Positions 29, 74, and 174 each coordinate alpha-L-arabinofuranose. The active-site Proton donor/acceptor is glutamate 175. Residues tyrosine 246, glutamate 294, and glutamine 351 each contribute to the alpha-L-arabinofuranose site. Glutamate 294 functions as the Nucleophile in the catalytic mechanism.

The protein belongs to the glycosyl hydrolase 51 family. In terms of assembly, homohexamer; trimer of dimers.

Its subcellular location is the cytoplasm. The enzyme catalyses Hydrolysis of terminal non-reducing alpha-L-arabinofuranoside residues in alpha-L-arabinosides.. Its pathway is glycan metabolism; L-arabinan degradation. Its activity is regulated as follows. Strongly inhibited by Hg(2+). Functionally, involved in the degradation of arabinan and is a key enzyme in the complete degradation of the plant cell wall. Catalyzes the cleavage of terminal alpha-(1-&gt;5)-arabinofuranosyl bonds in different hemicellulosic homopolysaccharides (branched and debranched arabinans). It acts preferentially on aryl-alpha-L-arabinofuranosides, and is much less effective on aryl-beta-D-xylopyranosides. The protein is Intracellular exo-alpha-(1-&gt;5)-L-arabinofuranosidase (abfA) of Geobacillus stearothermophilus (Bacillus stearothermophilus).